The chain runs to 194 residues: Large ribosomal subunit protein eL15 (194 aa).

The tract at residues 164 to 194 (SAGKKGRGLRNKGIGAEKVRPSIRAHGRRGK) is disordered. The segment covering 184-194 (PSIRAHGRRGK) has biased composition (basic residues).

It belongs to the eukaryotic ribosomal protein eL15 family.

The chain is Large ribosomal subunit protein eL15 (rpl15e) from Methanocaldococcus jannaschii (strain ATCC 43067 / DSM 2661 / JAL-1 / JCM 10045 / NBRC 100440) (Methanococcus jannaschii).